A 284-amino-acid chain; its full sequence is L-ribulose-5-phosphate 3-epimerase UlaE (284 aa).

Belongs to the L-ribulose-5-phosphate 3-epimerase family.

The catalysed reaction is L-ribulose 5-phosphate = L-xylulose 5-phosphate. Its pathway is cofactor degradation; L-ascorbate degradation; D-xylulose 5-phosphate from L-ascorbate: step 3/4. Its function is as follows. Catalyzes the isomerization of L-xylulose-5-phosphate to L-ribulose-5-phosphate. Is involved in the anaerobic L-ascorbate utilization. The chain is L-ribulose-5-phosphate 3-epimerase UlaE from Salmonella choleraesuis (strain SC-B67).